The primary structure comprises 274 residues: tRNA (mnm(5)s(2)U34)-methyltransferase, chloroplastic (274 aa).

A chloroplast-targeting transit peptide spans methionine 1–cysteine 50. Residues asparagine 108, asparagine 110, aspartate 134, glutamine 136, and histidine 166 each coordinate S-adenosyl-L-methionine.

It belongs to the methyltransferase superfamily. MnmM family.

The protein localises to the plastid. The protein resides in the chloroplast. The catalysed reaction is 5-aminomethyl-2-thiouridine(34) in tRNA + S-adenosyl-L-methionine = 5-methylaminomethyl-2-thiouridine(34) in tRNA + S-adenosyl-L-homocysteine + H(+). The protein operates within tRNA modification. Its function is as follows. Involved in the biosynthesis of 5-methylaminomethyl-2-thiouridine (mnm(5)s(2)U) at the wobble position (U34) in tRNA. Catalyzes the transfer of a methyl group from S-adenosyl-L-methionine to nm(5)s(2)U34 to form mnm(5)s(2)U34. The protein is tRNA (mnm(5)s(2)U34)-methyltransferase, chloroplastic of Arabidopsis thaliana (Mouse-ear cress).